Here is a 1325-residue protein sequence, read N- to C-terminus: ATP-binding cassette sub-family C member 4 (1325 aa).

The next 6 membrane-spanning stretches (helical) occupy residues 93-113 (LILGIFTLIEEGTRVVQPLFL), 136-156 (GYAAVLSMCTLILAILHHLYF), 205-225 (FDQVTIFLHFLWAGPLQAIAV), 227-247 (VLLWVEIGISCLAGLAVLVIL), 322-342 (ASFFIANKVILFVTFTSYVLL), and 351-371 (VFVAMTLYGAVRLTVTLFFPS). Positions 93–377 (LILGIFTLIE…FFPSAIERGS (285 aa)) constitute an ABC transmembrane type-1 1 domain. The ABC transporter 1 domain maps to 410 to 633 (VHVQDFTAFW…GVDFGSLLKK (224 aa)). 445 to 452 (GPVGAGKS) is an ATP binding site. A phosphothreonine mark is found at T646 and T648. Positions 657–667 (ASIWSQQSSRP) are enriched in polar residues. The disordered stretch occupies residues 657–690 (ASIWSQQSSRPSLKDGAPEGQDAENTQAVQPEES). Phosphoserine occurs at positions 664 and 668. 5 helical membrane passes run 710–730 (SWFFIIFLVLLNMVGQVFYVL), 761–781 (LSWYLGIYAGLTAVTVLFGIA), 849–869 (LVVSVIAVAAAVIPWILIPLV), 954–974 (AICAIFVIVVAFGSLVLAKTL), and 977–997 (GQVGLALSYALTLMGMFQWSV). The 292-residue stretch at 714–1005 (IIFLVLLNMV…SVRQSAEVEN (292 aa)) folds into the ABC transmembrane type-1 2 domain. The 234-residue stretch at 1041-1274 (IVFDNVNFTY…PESLFYKMVQ (234 aa)) folds into the ABC transporter 2 domain. An ATP-binding site is contributed by 1075–1082 (GRTGAGKS). Residues 1322–1325 (ETAL) carry the PDZ-binding motif.

As to quaternary structure, interacts (via PDZ-binding motif) with SNX27 (via PDZ domain); this interaction accelerates MRP4 internalization. Mg(2+) is required as a cofactor. Post-translationally, N-glycosylated; leading to substrate-selective effects on its transport activity.

It localises to the basolateral cell membrane. Its subcellular location is the apical cell membrane. It carries out the reaction ATP + H2O + xenobioticSide 1 = ADP + phosphate + xenobioticSide 2.. The catalysed reaction is an S-substituted glutathione(in) + ATP + H2O = an S-substituted glutathione(out) + ADP + phosphate + H(+). It catalyses the reaction 17beta-estradiol 17-O-(beta-D-glucuronate)(in) + ATP + H2O = 17beta-estradiol 17-O-(beta-D-glucuronate)(out) + ADP + phosphate + H(+). The enzyme catalyses dehydroepiandrosterone 3-sulfate(in) + ATP + H2O = dehydroepiandrosterone 3-sulfate(out) + ADP + phosphate + H(+). It carries out the reaction leukotriene C4(in) + ATP + H2O = leukotriene C4(out) + ADP + phosphate + H(+). The catalysed reaction is leukotriene B4(in) + ATP + H2O = leukotriene B4(out) + ADP + phosphate + H(+). It catalyses the reaction urate(in) + ATP + H2O = urate(out) + ADP + phosphate + H(+). The enzyme catalyses 3',5'-cyclic GMP(in) + ATP + H2O = 3',5'-cyclic GMP(out) + ADP + phosphate + H(+). It carries out the reaction 3',5'-cyclic AMP(in) + ATP + H2O = 3',5'-cyclic AMP(out) + ADP + phosphate + H(+). The catalysed reaction is prostaglandin E2(in) + ATP + H2O = prostaglandin E2(out) + ADP + phosphate + H(+). It catalyses the reaction prostaglandin E1(in) + ATP + H2O = prostaglandin E1(out) + ADP + phosphate + H(+). The enzyme catalyses glycodeoxycholate(in) + glutathione(in) + ATP + H2O = glycodeoxycholate(out) + glutathione(out) + ADP + phosphate + H(+). It carries out the reaction cholate(in) + glutathione(in) + ATP + H2O = cholate(out) + glutathione(out) + ADP + phosphate + H(+). The catalysed reaction is glycocholate(in) + glutathione(in) + ATP + H2O = glycocholate(out) + glutathione(out) + ADP + phosphate + H(+). It catalyses the reaction taurocholate(in) + glutathione(in) + ATP + H2O = taurocholate(out) + glutathione(out) + ADP + phosphate + H(+). The enzyme catalyses glycochenodeoxycholate(in) + glutathione(in) + ATP + H2O = glycochenodeoxycholate(out) + glutathione(out) + ADP + phosphate + H(+). It carries out the reaction taurochenodeoxycholate(in) + glutathione(in) + ATP + H2O = taurochenodeoxycholate(out) + glutathione(out) + ADP + phosphate + H(+). The catalysed reaction is glycoursodeoxycholate(in) + glutathione(in) + ATP + H2O = glycoursodeoxycholate(out) + glutathione(out) + ADP + phosphate + H(+). It catalyses the reaction tauroursodeoxycholate(in) + glutathione(in) + ATP + H2O = tauroursodeoxycholate(out) + glutathione(out) + ADP + phosphate + H(+). Its function is as follows. ATP-dependent transporter of the ATP-binding cassette (ABC) family that actively extrudes physiological compounds and xenobiotics from cells. Transports a range of endogenous molecules that have a key role in cellular communication and signaling, including cyclic nucleotides such as cyclic AMP (cAMP) and cyclic GMP (cGMP), bile acids, steroid conjugates, urate, and prostaglandins. Also mediates the ATP-dependent efflux of glutathione conjugates such as leukotriene C4 (LTC4) and leukotriene B4 (LTB4). The presence of GSH is necessary for the ATP-dependent transport of LTB4, whereas GSH is not required for the transport of LTC4. Mediates the cotransport of bile acids with reduced glutathione (GSH). Transports a wide range of drugs and their metabolites, including anticancer, antiviral and antibiotics molecules. Confers resistance to anticancer agents. The protein is ATP-binding cassette sub-family C member 4 of Mus musculus (Mouse).